The following is a 363-amino-acid chain: MASAVLSSVPTTASRFALLQVDSGSGSDSEPGKGKGRNTGKSQTNKSTTNEKKREKRRKKKEQQQSEANELRNLAFKKIPQKSSHAICNAQHELSLPNPVQKDSREENWQEWRQRDEQLTSEMFEADLEKALLLSKLEYEEHKKEYENAENASTQSKVMNKKDKRKTHQGKDKPLTISLKEFQSEDHISKKTEELSSQILSHDGGFFNRLEDDVHKILTREKRREQLTEYNGTDNYTVHEHNQEVVLKDGRIERLKLELERKDAEIQKLKNVIAQWEAKYKEVKARNAQLLKMLQEGEMKDKAEILLQVDESQSIKNELTIQVTSLHAALEQERSKVKVLQAELAKYQGGRKGKRNSESDQCR.

Positions methionine 1–glutamate 93 are interaction with IRS1. Disordered stretches follow at residues glutamine 20–glutamate 111 and glutamate 145–lysine 171. Residues serine 23, serine 25, and serine 27 each carry the phosphoserine modification. The span at threonine 39–threonine 48 shows a compositional bias: polar residues. The stretch at glutamine 43–alanine 75 forms a coiled coil. Residues lysine 102–glutamate 111 are compositionally biased toward basic and acidic residues. Serine 104 bears the Phosphoserine; by PKG mark. Coiled-coil stretches lie at residues alanine 126–valine 158 and glutamate 240–glycine 350.

This sequence belongs to the GKAP1 family. In terms of assembly, interacts with PRKG1 and IRS1.

The protein resides in the golgi apparatus. Regulates insulin-dependent IRS1 tyrosine phosphorylation in adipocytes by modulating the availability of IRS1 to IR tyrosine kinase. Its association with IRS1 is required for insulin-induced translocation of SLC2A4 to the cell membrane. Involved in TNF-induced impairment of insulin-dependent IRS1 tyrosine phosphorylation. The sequence is that of G kinase-anchoring protein 1 (GKAP1) from Bos taurus (Bovine).